The chain runs to 165 residues: Protein C2-DOMAIN ABA-RELATED 7 (165 aa).

At Met1 the chain carries N-acetylmethionine. The C2 domain maps to 1–106 (MEELVGLLRI…HKMGLQELPD (106 aa)). Ca(2+) contacts are provided by Arg21, Asp22, Asp27, Asp73, Lys74, Asp75, and Asp81.

The protein belongs to the plant CAR protein family. As to quaternary structure, binds to PYR/PYL/RCAR abscisic acid intracellular receptors in an ABA-independent manner, both at the plasma membrane and in the nucleus.

It localises to the cell membrane. It is found in the nucleus. Its function is as follows. Stimulates the GTPase/ATPase activities of Obg-like ATPases. Mediates the transient calcium-dependent interaction of PYR/PYL/RCAR abscisic acid (ABA) receptors with the plasma membrane and thus regulates ABA sensitivity. This is Protein C2-DOMAIN ABA-RELATED 7 from Arabidopsis thaliana (Mouse-ear cress).